Reading from the N-terminus, the 390-residue chain is Protein PIN-LIKES 3 (390 aa).

The Lumenal segment spans residues 1 to 14; it reads MVKLLELFITSSKP. A helical transmembrane segment spans residues 15–35; that stretch reads VVEILLITSVGFYMALDGVNL. Residues 36-43 are Cytoplasmic-facing; sequence LGHDARKY. The helical transmembrane segment at 44 to 61 threads the bilayer; that stretch reads LNNIVFYVFSPSLIGSRL. The Lumenal portion of the chain corresponds to 62–76; that stretch reads ADSVTYESLVKMWFM. A helical transmembrane segment spans residues 77–97; that stretch reads PVNVLLTFIIGSLLGWIVIVI. The Cytoplasmic segment spans residues 98-107; it reads TKPPSHLRGL. A helical transmembrane segment spans residues 108–128; it reads ILGCCAAGNLGNMPLIIIPAV. Over 129 to 144 the chain is Lumenal; the sequence is CKEKGGPFGDPESCQK. A helical membrane pass occupies residues 145–165; that stretch reads YGMGYVALSMAMGSIYIWTYV. Over 166-227 the chain is Cytoplasmic; the sequence is YNLMRVLSNS…SLSQKVNLKT (62 aa). Residues 228-248 traverse the membrane as a helical segment; it reads IFAPSTIAAMIALVIGLITPL. The Lumenal portion of the chain corresponds to 249–265; that stretch reads RKLIIGTEAPLRVLQDS. A helical transmembrane segment spans residues 266–286; the sequence is VTLVGDGAVPAMTMIIGGNLL. Residues 287–297 lie on the Cytoplasmic side of the membrane; the sequence is KGLRSSGMKMS. The chain crosses the membrane as a helical span at residues 298-318; that stretch reads SIIGVLVARYVLLPMSGVLIV. Residues 319-331 are Lumenal-facing; it reads RGAYKLDLVTSEP. The chain crosses the membrane as a helical span at residues 332-352; it reads LYQFVLLLQYAVPPAMNLGTI. Residues 353-364 lie on the Cytoplasmic side of the membrane; it reads TQLFGTGESECS. The helical transmembrane segment at 365 to 385 threads the bilayer; that stretch reads VIMLWTYSLASIALTVWPTFF. Residues 386-390 lie on the Lumenal side of the membrane; that stretch reads MWLVA.

This sequence belongs to the auxin efflux carrier (TC 2.A.69.2) family. Expressed in seedlings, rosette and cauline leaves, flowers and siliques.

The protein resides in the endoplasmic reticulum membrane. Functionally, involved in cellular auxin homeostasis by regulating auxin metabolism. Regulates intracellular auxin accumulation at the endoplasmic reticulum and thus auxin availability for nuclear auxin signaling. This is Protein PIN-LIKES 3 (PILS3) from Arabidopsis thaliana (Mouse-ear cress).